Reading from the N-terminus, the 265-residue chain is Mlc titration factor A (265 aa).

Positions 111, 148, 152, and 211 each coordinate Zn(2+).

It belongs to the MtfA family. Interacts with Mlc. The cofactor is Zn(2+).

The protein localises to the cytoplasm. In terms of biological role, involved in the modulation of the activity of the glucose-phosphotransferase system (glucose-PTS). Interacts with the transcriptional repressor Mlc, preventing its interaction with DNA and leading to the modulation of expression of genes regulated by Mlc, including ptsG, which encodes the PTS system glucose-specific EIICB component. Shows zinc-dependent metallopeptidase activity. The protein is Mlc titration factor A of Pectobacterium atrosepticum (strain SCRI 1043 / ATCC BAA-672) (Erwinia carotovora subsp. atroseptica).